We begin with the raw amino-acid sequence, 229 residues long: Putative N-acetylmannosamine-6-phosphate 2-epimerase (229 aa).

It belongs to the NanE family.

The enzyme catalyses an N-acyl-D-glucosamine 6-phosphate = an N-acyl-D-mannosamine 6-phosphate. Its pathway is amino-sugar metabolism; N-acetylneuraminate degradation; D-fructose 6-phosphate from N-acetylneuraminate: step 3/5. Converts N-acetylmannosamine-6-phosphate (ManNAc-6-P) to N-acetylglucosamine-6-phosphate (GlcNAc-6-P). In Salmonella arizonae (strain ATCC BAA-731 / CDC346-86 / RSK2980), this protein is Putative N-acetylmannosamine-6-phosphate 2-epimerase.